The primary structure comprises 383 residues: Cell division protein FtsZ (383 aa).

Residues G20 to N24, G107 to G109, E138, R142, and N186 each bind GTP.

Belongs to the FtsZ family. In terms of assembly, homodimer. Polymerizes to form a dynamic ring structure in a strictly GTP-dependent manner. Interacts directly with several other division proteins.

It localises to the cytoplasm. Its function is as follows. Essential cell division protein that forms a contractile ring structure (Z ring) at the future cell division site. The regulation of the ring assembly controls the timing and the location of cell division. One of the functions of the FtsZ ring is to recruit other cell division proteins to the septum to produce a new cell wall between the dividing cells. Binds GTP and shows GTPase activity. The chain is Cell division protein FtsZ from Escherichia coli O157:H7.